Reading from the N-terminus, the 62-residue chain is Double zinc ribbon protein TK0111 (62 aa).

Residues cysteine 13, cysteine 16, cysteine 31, cysteine 34, cysteine 42, cysteine 45, cysteine 54, and cysteine 57 each coordinate Zn(2+).

In terms of assembly, crystallized in association with 70S ribosomes. It depends on Zn(2+) as a cofactor.

This is Double zinc ribbon protein TK0111 from Thermococcus kodakarensis (strain ATCC BAA-918 / JCM 12380 / KOD1) (Pyrococcus kodakaraensis (strain KOD1)).